We begin with the raw amino-acid sequence, 212 residues long: Ribosomal RNA small subunit methyltransferase G (212 aa).

S-adenosyl-L-methionine contacts are provided by residues G72, L77, 123–124 (VE), and R138.

Belongs to the methyltransferase superfamily. RNA methyltransferase RsmG family.

The protein resides in the cytoplasm. It catalyses the reaction guanosine(527) in 16S rRNA + S-adenosyl-L-methionine = N(7)-methylguanosine(527) in 16S rRNA + S-adenosyl-L-homocysteine. Its function is as follows. Specifically methylates the N7 position of guanine in position 527 of 16S rRNA. The polypeptide is Ribosomal RNA small subunit methyltransferase G (Histophilus somni (strain 129Pt) (Haemophilus somnus)).